Reading from the N-terminus, the 319-residue chain is Lipoyl synthase (319 aa).

Residues 6 to 29 (DTVSANPVRPRHPEKAARPDALSP) are disordered. Positions 16 to 29 (RHPEKAARPDALSP) are enriched in basic and acidic residues. [4Fe-4S] cluster-binding residues include Cys-61, Cys-66, Cys-72, Cys-87, Cys-91, Cys-94, and Ser-300. Residues 73-289 (WDKKHATFMI…QTTAYAKGFL (217 aa)) enclose the Radical SAM core domain.

It belongs to the radical SAM superfamily. Lipoyl synthase family. Requires [4Fe-4S] cluster as cofactor.

The protein localises to the cytoplasm. The catalysed reaction is [[Fe-S] cluster scaffold protein carrying a second [4Fe-4S](2+) cluster] + N(6)-octanoyl-L-lysyl-[protein] + 2 oxidized [2Fe-2S]-[ferredoxin] + 2 S-adenosyl-L-methionine + 4 H(+) = [[Fe-S] cluster scaffold protein] + N(6)-[(R)-dihydrolipoyl]-L-lysyl-[protein] + 4 Fe(3+) + 2 hydrogen sulfide + 2 5'-deoxyadenosine + 2 L-methionine + 2 reduced [2Fe-2S]-[ferredoxin]. It participates in protein modification; protein lipoylation via endogenous pathway; protein N(6)-(lipoyl)lysine from octanoyl-[acyl-carrier-protein]: step 2/2. Its function is as follows. Catalyzes the radical-mediated insertion of two sulfur atoms into the C-6 and C-8 positions of the octanoyl moiety bound to the lipoyl domains of lipoate-dependent enzymes, thereby converting the octanoylated domains into lipoylated derivatives. This is Lipoyl synthase from Rhodopseudomonas palustris (strain ATCC BAA-98 / CGA009).